The chain runs to 106 residues: Met repressor (106 aa).

Belongs to the MetJ family. Homodimer.

It is found in the cytoplasm. In terms of biological role, this regulatory protein, when combined with SAM (S-adenosylmethionine) represses the expression of the methionine regulon and of enzymes involved in SAM synthesis. The protein is Met repressor of Vibrio campbellii (strain ATCC BAA-1116).